We begin with the raw amino-acid sequence, 346 residues long: uncharacterized protein (346 aa).

Residues 322 to 346 (GRDGGYRETTSPPTGRGRNVRGSHA) are disordered.

This is an uncharacterized protein from Mycobacterium tuberculosis (strain CDC 1551 / Oshkosh).